Reading from the N-terminus, the 105-residue chain is Replication restart protein PriB (105 aa).

An SSB domain is found at 1–102 (MTTNRLVLSG…LHAEQIELID (102 aa)).

It belongs to the PriB family. As to quaternary structure, homodimer. Interacts with PriA and DnaT. Component of the replication restart primosome. Primosome assembly occurs via a 'hand-off' mechanism. PriA binds to replication forks, subsequently PriB then DnaT bind; DnaT then displaces ssDNA to generate the helicase loading substrate.

Involved in the restart of stalled replication forks, which reloads the replicative helicase on sites other than the origin of replication; the PriA-PriB pathway is the major replication restart pathway. During primosome assembly it facilitates complex formation between PriA and DnaT on DNA; stabilizes PriA on DNA. Stimulates the DNA unwinding activity of PriA helicase. This is Replication restart protein PriB from Photorhabdus laumondii subsp. laumondii (strain DSM 15139 / CIP 105565 / TT01) (Photorhabdus luminescens subsp. laumondii).